The primary structure comprises 206 residues: Large ribosomal subunit protein uL4 (206 aa).

Positions 63-98 (MYRQKGTGRARHSSARAPQFRGGGKAHGPVPHSHAH) are disordered. A compositionally biased stretch (basic residues) spans 64–76 (YRQKGTGRARHSS).

This sequence belongs to the universal ribosomal protein uL4 family. Part of the 50S ribosomal subunit.

One of the primary rRNA binding proteins, this protein initially binds near the 5'-end of the 23S rRNA. It is important during the early stages of 50S assembly. It makes multiple contacts with different domains of the 23S rRNA in the assembled 50S subunit and ribosome. Its function is as follows. Forms part of the polypeptide exit tunnel. This Chelativorans sp. (strain BNC1) protein is Large ribosomal subunit protein uL4.